We begin with the raw amino-acid sequence, 77 residues long: Acyl carrier protein (77 aa).

A Carrier domain is found at 2–77; sequence SDIEQRVKNV…LAIDYVKSHQ (76 aa). Position 37 is an O-(pantetheine 4'-phosphoryl)serine (serine 37).

The protein belongs to the acyl carrier protein (ACP) family. Post-translationally, 4'-phosphopantetheine is transferred from CoA to a specific serine of apo-ACP by AcpS. This modification is essential for activity because fatty acids are bound in thioester linkage to the sulfhydryl of the prosthetic group.

Its subcellular location is the cytoplasm. The protein operates within lipid metabolism; fatty acid biosynthesis. In terms of biological role, carrier of the growing fatty acid chain in fatty acid biosynthesis. This is Acyl carrier protein from Leucothrix mucor.